The chain runs to 469 residues: Glutamate--tRNA ligase 2 (469 aa).

A 'HIGH' region motif is present at residues 10–20 (PSPTGYLHIGG). Zn(2+) contacts are provided by cysteine 99, cysteine 101, cysteine 126, and aspartate 128. Positions 237–241 (RLSKR) match the 'KMSKS' region motif. Residue lysine 240 participates in ATP binding.

This sequence belongs to the class-I aminoacyl-tRNA synthetase family. Glutamate--tRNA ligase type 1 subfamily. Monomer. The cofactor is Zn(2+).

It is found in the cytoplasm. The enzyme catalyses tRNA(Glu) + L-glutamate + ATP = L-glutamyl-tRNA(Glu) + AMP + diphosphate. Functionally, catalyzes the attachment of glutamate to tRNA(Glu) in a two-step reaction: glutamate is first activated by ATP to form Glu-AMP and then transferred to the acceptor end of tRNA(Glu). The protein is Glutamate--tRNA ligase 2 of Coxiella burnetii (strain CbuG_Q212) (Coxiella burnetii (strain Q212)).